A 397-amino-acid chain; its full sequence is Bifunctional enzyme IspD/IspF (397 aa).

Positions 1–233 (MCAKKYKIAA…KLLFEEPKFR (233 aa)) are 2-C-methyl-D-erythritol 4-phosphate cytidylyltransferase. Residues 233 to 397 (RVGAGYDIHK…VLLHTNFYWK (165 aa)) are 2-C-methyl-D-erythritol 2,4-cyclodiphosphate synthase. The a divalent metal cation site is built by aspartate 239 and histidine 241. Residues 239–241 (DIH) and 270–271 (HS) each bind 4-CDP-2-C-methyl-D-erythritol 2-phosphate. Histidine 278 provides a ligand contact to a divalent metal cation. Residues 292–294 (DIG), 368–371 (TTAE), tyrosine 375, and arginine 378 each bind 4-CDP-2-C-methyl-D-erythritol 2-phosphate.

This sequence in the N-terminal section; belongs to the IspD/TarI cytidylyltransferase family. IspD subfamily. It in the C-terminal section; belongs to the IspF family. The cofactor is a divalent metal cation.

The catalysed reaction is 2-C-methyl-D-erythritol 4-phosphate + CTP + H(+) = 4-CDP-2-C-methyl-D-erythritol + diphosphate. It catalyses the reaction 4-CDP-2-C-methyl-D-erythritol 2-phosphate = 2-C-methyl-D-erythritol 2,4-cyclic diphosphate + CMP. The protein operates within isoprenoid biosynthesis; isopentenyl diphosphate biosynthesis via DXP pathway; isopentenyl diphosphate from 1-deoxy-D-xylulose 5-phosphate: step 2/6. It functions in the pathway isoprenoid biosynthesis; isopentenyl diphosphate biosynthesis via DXP pathway; isopentenyl diphosphate from 1-deoxy-D-xylulose 5-phosphate: step 4/6. Its function is as follows. Bifunctional enzyme that catalyzes the formation of 4-diphosphocytidyl-2-C-methyl-D-erythritol from CTP and 2-C-methyl-D-erythritol 4-phosphate (MEP) (IspD), and catalyzes the conversion of 4-diphosphocytidyl-2-C-methyl-D-erythritol 2-phosphate (CDP-ME2P) to 2-C-methyl-D-erythritol 2,4-cyclodiphosphate (ME-CPP) with a corresponding release of cytidine 5-monophosphate (CMP) (IspF). This is Bifunctional enzyme IspD/IspF from Wolbachia pipientis wMel.